Consider the following 938-residue polypeptide: Chaperone protein ClpD1, chloroplastic (938 aa).

The transit peptide at 1-83 (MEVCCCSTSS…FERFTERAVK (83 aa)) directs the protein to the chloroplast. Repeat regions lie at residues 84 to 145 (AVVL…TPGA) and 159 to 224 (FSGS…LQAE). The 141-residue stretch at 84–224 (AVVLSQREAK…SVALTRLQAE (141 aa)) folds into the Clp R domain. Residues 234–255 (GASSFKVPKKSPAGAGRSAFSK) are disordered. An i region spans residues 266–519 (LDQFCLDLTT…RMESFNRKKE (254 aa)). ATP-binding positions include 311–318 (GEAGVGKT) and 660–667 (GPTGVGKT). The segment at 586 to 777 (VGTEEIARVA…LIVMTSNIGS (192 aa)) is II.

Belongs to the ClpA/ClpB family. ClpD subfamily. In terms of tissue distribution, expressed in stems, culms and leaves.

The protein resides in the plastid. Its subcellular location is the chloroplast. Functionally, molecular chaperone that may function in heat stress response. May interact with a ClpP-like protease involved in degradation of denatured proteins in the chloroplast. Chaperone involved in response to abiotic stresses. Plays a positive role during dehydration and salt stress. The polypeptide is Chaperone protein ClpD1, chloroplastic (Oryza sativa subsp. japonica (Rice)).